The chain runs to 64 residues: Drosocin antimicrobial peptides (64 aa).

An N-terminal signal peptide occupies residues 1–19; it reads MKFTIVFLLLACVFAMAVA. A propeptide spanning residues 20-21 is cleaved from the precursor; it reads TP. An O-linked (GalNAc...) serine glycan is attached at serine 28. The O-linked (GalNAc...) threonine glycan is linked to threonine 32. The tract at residues 32-40 is critical for inhibition of translation, possibly due to its role in mediating interactions with bacterial 23S rRNA and peptide chain release factors; the sequence is TSHPRPIRV.

This sequence belongs to the drosocin family. In terms of assembly, associates with the bacterial 50S ribosomal complex, occupying the nascent peptide exit tunnel. Interacts with bacterial 23S rRNA; this interaction is direct. Interacts with bacterial rplV/50S ribosomal protein L22; this interaction is direct. Interacts with bacterial prfA/peptide chain release factor RF1; while associated with the bacterial 50S ribosomal complex, this interaction is direct and traps RF1 on the ribosome, inhibiting further translation. In terms of processing, proteolytically cleaved at a pair of basic residues corresponding to the RXK/RR optimal cleavage site for furin proteases to produce two distinct antibacterial peptides. O-glycosylated. O-glycosylation may be required for efficient uptake by target bacterial cells. Monosaccharide modification of Thr-32 provides better antibacterial activity than disaccharide modification or no modification. O-glycosylation of Thr-32 is not essential for antimicrobial activity but enhances this activity by mediating interactions with the 23S rRNA and increasing the efficiency of translation inhibition.

It localises to the secreted. Functionally, antibacterial peptide with strong anti-Gram-negative bacteria activity. Significantly contributes to antibacterial activity against Enterobacter cloacae but not Providencia burhodogranariea. Inhibitor of bacterial translation machinery that targets translation termination in a prfA- or prfB-dependent manner. Binds within the nascent peptide exit tunnel of the bacterial large ribosomal subunit, potentially interfering with nascent chain translocation that occurs post-peptide bond formation. Binds prfA/RF1 (and potentially prfB/RF2), trapping it on the ribosome after release of the nascent polypeptide chain and preventing further translation. The resulting depletion of peptide chain release factors further disrupts bacterial translation by preventing ribosomal peptide chain release and inducing stop codon readthrough. Entry into target Escherichia coli cells requires the bacterial peptide antibiotic transporter sbmA. Peptide with significant antibacterial activity against Providencia burhodogranariea but not Enterobacter cloacae. The sequence is that of Drosocin antimicrobial peptides (Dro) from Drosophila simulans (Fruit fly).